Reading from the N-terminus, the 707-residue chain is Mitochondrial disaggregase (707 aa).

The transit peptide at 1–36 (MLGSLVLRRKALAPRLLLRLLRSPTLRGHGGASGRN) directs the protein to the mitochondrion. The autoinhibitory stretch occupies residues 92–126 (PGPEETLPGQDSWNGVPSRAGLGMCALAAALVVHC). ANK repeat units lie at residues 133–162 (NKDA…DVNA), 166–195 (LGWT…DPNL), 265–295 (KGCT…PLQR), and 298–327 (MGHT…EKQR). Positions 346, 348, 383, 384, 385, 386, 387, 388, 455, and 496 each coordinate ATP. The interval 507–535 (LQLRQEALEMSRNRIAENLGDVQISDKIT) is regulatory; slows ATPase and disaggregase activities. An ATP-binding site is contributed by Arg-561. Lys-589 is modified (N6-acetyllysine). Position 620 (Arg-620) interacts with ATP.

The protein belongs to the ClpA/ClpB family. As to quaternary structure, homododecamer when substrate-bound; the homododecamer consists of 2 homohexamers stacked head-to-head via ANK repeat-mediated interactions. The active substrate-bound form is likely to exist in a dynamic equilibrium between homohexamers and homododecamers. Homotetradecamer in the unbound state which is remodeled upon substrate binding into the homododecamer. Interacts with PHB and PHB2. Interacts with MAVS; the interaction is enhanced by Sendai virus infection. Proteolytically cleaved by protease PARL. ATP-dependent protein disaggregase activity is stimulated by PARL-mediated cleavage of the N-terminal autoinhibitory peptide. As to expression, widely expressed (at protein level). Expressed in fetal, as well as in adult tissues, with highest levels in adult brain, including thalamus, hippocampus, occipital cortex and parietal cortex. Low expression in granulocytes.

The protein localises to the mitochondrion intermembrane space. The catalysed reaction is ATP + H2O = ADP + phosphate + H(+). With respect to regulation, disaggregase activity is inhibited by ADP. Functionally, functions as a regulatory ATPase and participates in secretion/protein trafficking process. Has ATP-dependent protein disaggregase activity and is required to maintain the solubility of key mitochondrial proteins. Involved in mitochondrial-mediated antiviral innate immunity, activates RIG-I-mediated signal transduction and production of IFNB1 and pro-inflammatory cytokine IL6. Plays a role in granulocyte differentiation. This chain is Mitochondrial disaggregase, found in Homo sapiens (Human).